The primary structure comprises 149 residues: UPF0306 protein PM1958 (149 aa).

Belongs to the UPF0306 family.

This is UPF0306 protein PM1958 from Pasteurella multocida (strain Pm70).